Consider the following 688-residue polypeptide: Bifunctional protein GAL10 (688 aa).

The galactowaldenase stretch occupies residues 1-346 (MSEDKYCLVT…TQDNPFGYQI (346 aa)). 6–37 (YCLVTGGAGYIGSHTVVELCEAGYKCIVVDNL) is a binding site for NAD(+). The interval 347–688 (KGVDSKFFGD…HKLSYTFRTL (342 aa)) is mutarotase. Catalysis depends on His-525, which acts as the For mutarotase activity.

In the N-terminal section; belongs to the NAD(P)-dependent epimerase/dehydratase family. This sequence in the C-terminal section; belongs to the aldose epimerase family. NAD(+) is required as a cofactor.

It carries out the reaction UDP-alpha-D-glucose = UDP-alpha-D-galactose. It catalyses the reaction alpha-D-glucose = beta-D-glucose. Its pathway is carbohydrate metabolism; galactose metabolism. The protein operates within carbohydrate metabolism; hexose metabolism. Mutarotase converts alpha-aldose to the beta-anomer. It is active on D-glucose, L-arabinose, D-xylose, D-galactose, maltose and lactose. The chain is Bifunctional protein GAL10 (GAL10) from Kluyveromyces lactis (strain ATCC 8585 / CBS 2359 / DSM 70799 / NBRC 1267 / NRRL Y-1140 / WM37) (Yeast).